A 358-amino-acid chain; its full sequence is Peptide chain release factor 1 (358 aa).

An N5-methylglutamine modification is found at Q233.

It belongs to the prokaryotic/mitochondrial release factor family. Post-translationally, methylated by PrmC. Methylation increases the termination efficiency of RF1.

The protein resides in the cytoplasm. In terms of biological role, peptide chain release factor 1 directs the termination of translation in response to the peptide chain termination codons UAG and UAA. The sequence is that of Peptide chain release factor 1 from Brevibacillus brevis (strain 47 / JCM 6285 / NBRC 100599).